The chain runs to 273 residues: SET domain-containing protein 9 (273 aa).

An SET domain is found at 96-269 (FSVAQATSSL…QGEELFSNYY (174 aa)). An S-adenosyl-L-methionine-binding site is contributed by Y268.

It belongs to the class V-like SAM-binding methyltransferase superfamily.

This Pongo abelii (Sumatran orangutan) protein is SET domain-containing protein 9 (SETD9).